A 192-amino-acid polypeptide reads, in one-letter code: Ion-translocating oxidoreductase complex subunit B (192 aa).

The interval 1 to 26 (MNTIWIAVGALTLLGLVFGAILGYAS) is hydrophobic. Positions 32 to 91 (EDDPVVEKIDAILPQSQCGQCGYPGCRPYAEAVGLQGEKINRCAPGGEAVMLKMAELLNV) constitute a 4Fe-4S domain. Residues cysteine 49, cysteine 52, cysteine 57, cysteine 74, cysteine 117, cysteine 120, cysteine 123, cysteine 127, cysteine 147, cysteine 150, cysteine 153, and cysteine 157 each contribute to the [4Fe-4S] cluster site. 4Fe-4S ferredoxin-type domains follow at residues 108-137 (MLAV…GATR) and 138-167 (AMHT…LRPV).

Belongs to the 4Fe4S bacterial-type ferredoxin family. RnfB subfamily. In terms of assembly, the complex is composed of six subunits: RsxA, RsxB, RsxC, RsxD, RsxE and RsxG. Requires [4Fe-4S] cluster as cofactor.

The protein localises to the cell inner membrane. In terms of biological role, part of a membrane-bound complex that couples electron transfer with translocation of ions across the membrane. Required to maintain the reduced state of SoxR. This is Ion-translocating oxidoreductase complex subunit B from Salmonella agona (strain SL483).